Reading from the N-terminus, the 478-residue chain is Glucose-6-phosphate 1-dehydrogenase (478 aa).

NADP(+) is bound by residues R48, 86–87 (DF), and K142. Residues H172, K176, E210, and D229 each coordinate substrate. Catalysis depends on H234, which acts as the Proton acceptor. Positions 334 and 339 each coordinate substrate.

Belongs to the glucose-6-phosphate dehydrogenase family.

It catalyses the reaction D-glucose 6-phosphate + NADP(+) = 6-phospho-D-glucono-1,5-lactone + NADPH + H(+). The protein operates within carbohydrate degradation; pentose phosphate pathway; D-ribulose 5-phosphate from D-glucose 6-phosphate (oxidative stage): step 1/3. Catalyzes the oxidation of glucose 6-phosphate to 6-phosphogluconolactone. The polypeptide is Glucose-6-phosphate 1-dehydrogenase (Borreliella burgdorferi (strain ATCC 35210 / DSM 4680 / CIP 102532 / B31) (Borrelia burgdorferi)).